Here is a 300-residue protein sequence, read N- to C-terminus: Porphobilinogen deaminase (300 aa).

Residue cysteine 242 is modified to S-(dipyrrolylmethanemethyl)cysteine.

This sequence belongs to the HMBS family. In terms of assembly, monomer. Dipyrromethane is required as a cofactor.

The catalysed reaction is 4 porphobilinogen + H2O = hydroxymethylbilane + 4 NH4(+). It participates in porphyrin-containing compound metabolism; protoporphyrin-IX biosynthesis; coproporphyrinogen-III from 5-aminolevulinate: step 2/4. In terms of biological role, tetrapolymerization of the monopyrrole PBG into the hydroxymethylbilane pre-uroporphyrinogen in several discrete steps. The chain is Porphobilinogen deaminase from Blochmanniella pennsylvanica (strain BPEN).